The sequence spans 242 residues: ATP synthase subunit a (242 aa).

The next 6 helical transmembrane spans lie at 29–49 (SAVA…IAFV), 83–103 (VFFP…IIGM), 114–134 (IIVT…YGIY), 140–160 (FFSL…MVII), 181–201 (VAGH…TWFF), and 206–226 (IALV…QAYI).

The protein belongs to the ATPase A chain family. F-type ATPases have 2 components, CF(1) - the catalytic core - and CF(0) - the membrane proton channel. CF(1) has five subunits: alpha(3), beta(3), gamma(1), delta(1), epsilon(1). CF(0) has three main subunits: a(1), b(2) and c(9-12). The alpha and beta chains form an alternating ring which encloses part of the gamma chain. CF(1) is attached to CF(0) by a central stalk formed by the gamma and epsilon chains, while a peripheral stalk is formed by the delta and b chains.

It is found in the cell inner membrane. Key component of the proton channel; it plays a direct role in the translocation of protons across the membrane. The sequence is that of ATP synthase subunit a from Orientia tsutsugamushi (strain Boryong) (Rickettsia tsutsugamushi).